A 698-amino-acid polypeptide reads, in one-letter code: Topoisomerase subunit TopoN (698 aa).

An Isoglutamyl lysine isopeptide (Lys-Gln) (interchain with Q-Cter in protein Pup) cross-link involves residue Lys429. A disordered region spans residues 443-473 (GAKARARAASKAKGLGTNLSLPPKLLPSRES). The 115-residue stretch at 479 to 593 (AELFLCEGDS…AGMVYVTMPP (115 aa)) folds into the Toprim domain.

The protein belongs to the type II topoisomerase family. As to quaternary structure, a complex of TopoN and TopoM, possibly a heterotetramer. The cofactor is Mg(2+).

The catalysed reaction is ATP-dependent breakage, passage and rejoining of double-stranded DNA.. With respect to regulation, inhibited by quinolone antibiotic ciprofloxacin and coumarin antibiotic novobiocin, but at much higher concentrations than is usual for DNA gyrase/topoisomerase. Catalyzes the relaxation of negatively supercoiled DNA in the presence of ATP or dATP but not other nucleotides. Individual subunits have no activity. Not able to negatively supercoil DNA, it can however introduce positive supercoils in DNA. Relaxes positive supercoils in an ATP-dependent manner. Catenates and decatenates DNA. Generates dsDNA breaks in the presence of the quinolone antibiotic ciprofloxacin, showing it is a topoisomerase. In Mycolicibacterium smegmatis (strain ATCC 700084 / mc(2)155) (Mycobacterium smegmatis), this protein is Topoisomerase subunit TopoN.